The primary structure comprises 398 residues: Protochlorophyllide reductase, chloroplastic (398 aa).

The transit peptide at 1–64 (MALQAASLVS…NQQIGAIRAQ (64 aa)) directs the protein to the chloroplast.

This sequence belongs to the short-chain dehydrogenases/reductases (SDR) family. POR subfamily.

It is found in the plastid. The protein resides in the chloroplast. It catalyses the reaction chlorophyllide a + NADP(+) = protochlorophyllide a + NADPH + H(+). It participates in porphyrin-containing compound metabolism; chlorophyll biosynthesis. Phototransformation of protochlorophyllide (Pchlide) to chlorophyllide (Chlide). This Cucumis sativus (Cucumber) protein is Protochlorophyllide reductase, chloroplastic (PORA).